A 2205-amino-acid chain; its full sequence is Genome polyprotein (2205 aa).

Glycine 2 carries the N-myristoyl glycine; by host lipid modification. Topologically, residues 2–1518 (GAQVSSQKVG…NINRAMTILQ (1517 aa)) are cytoplasmic. Positions 579-599 (GLGDLIEGVVEGVTRNALTPL) are amphipathic alpha-helix. Polar residues predominate over residues 598 to 613 (PLTPVNNLPDTRSSGP). Residues 598-619 (PLTPVNNLPDTRSSGPAHSKET) form a disordered region. Active-site for protease 2A activity residues include histidine 899 and aspartate 917. Residues cysteine 934 and cysteine 936 each coordinate Zn(2+). Cysteine 988 acts as the For protease 2A activity in catalysis. Positions 994 and 996 each coordinate Zn(2+). Residues 1126-1198 (GDSWLKKFTE…HQSCPSQEHQ (73 aa)) are membrane-binding. Residues 1126-1264 (GDSWLKKFTE…SPGTGKSVAT (139 aa)) form an oligomerization region. The RNA-binding stretch occupies residues 1147–1151 (SNKIS). In terms of domain architecture, SF3 helicase spans 1230–1386 (EHTINNYVQF…SEYSRDGKLN (157 aa)). 1254–1261 (GSPGTGKS) contributes to the ATP binding site. Residues cysteine 1394, cysteine 1397, cysteine 1406, and cysteine 1411 each contribute to the Zn(2+) site. The segment at 1394–1411 (CKNCHQPANFKRCCPLVC) adopts a C4-type zinc-finger fold. Residues 1438–1445 (ERNRRSSI) are RNA-binding. Residues 1449-1454 (MEALFQ) are oligomerization. An intramembrane segment occupies 1519–1534 (AVTTFAAVAGVVYVMY). The Cytoplasmic portion of the chain corresponds to 1535–2205 (KLFAGHQGAY…TLYRRWLDSF (671 aa)). Residue tyrosine 1544 is modified to O-(5'-phospho-RNA)-tyrosine. The region spanning 1564 to 1742 (GPGFDYAVAM…FAAALKRSYF (179 aa)) is the Peptidase C3 domain. Catalysis depends on for protease 3C activity residues histidine 1603, glutamate 1634, and cysteine 1710. Residues 1971-2086 (MEEKLFDYTG…SYPHEVDASL (116 aa)) enclose the RdRp catalytic domain. Mg(2+) contacts are provided by aspartate 1977 and aspartate 2072.

The protein belongs to the picornaviruses polyprotein family. As to quaternary structure, interacts with capsid protein VP1 and capsid protein VP3 to form heterotrimeric protomers. In terms of assembly, interacts with capsid protein VP0, and capsid protein VP3 to form heterotrimeric protomers. Interacts with human PVR. Five protomers subsequently associate to form pentamers which serve as building blocks for the capsid. Interacts with capsid protein VP2, capsid protein VP3 and capsid protein VP4 following cleavage of capsid protein VP0. Interacts with capsid protein VP1 and capsid protein VP3 in the mature capsid. As to quaternary structure, interacts with capsid protein VP0 and capsid protein VP1 to form heterotrimeric protomers. Five protomers subsequently associate to form pentamers which serve as building blocks for the capsid. Interacts with capsid protein VP4 in the mature capsid. Interacts with protein 2C; this interaction may be important for virion morphogenesis. In terms of assembly, interacts with capsid protein VP1 and capsid protein VP3. Homodimer. As to quaternary structure, homohexamer; forms a hexameric ring structure with 6-fold symmetry characteristic of AAA+ ATPases. Interacts (via N-terminus) with host RTN3 (via reticulon domain); this interaction is important for viral replication. Interacts with capsid protein VP3; this interaction may be important for virion morphogenesis. In terms of assembly, interacts with protein 3CD. Homodimer. Interacts with host GBF1. Interacts (via GOLD domain) with host ACBD3 (via GOLD domain); this interaction allows the formation of a viral protein 3A/ACBD3 heterotetramer with a 2:2 stoichiometry, which will stimulate the recruitment of host PI4KB in order to synthesize PI4P at the viral RNA replication sites. As to quaternary structure, interacts with RNA-directed RNA polymerase. In terms of assembly, interacts with protein 3AB and with RNA-directed RNA polymerase. Interacts with Viral protein genome-linked and with protein 3CD. Requires Mg(2+) as cofactor. Post-translationally, specific enzymatic cleavages in vivo by the viral proteases yield processing intermediates and the mature proteins. In terms of processing, myristoylation is required for the formation of pentamers during virus assembly. Further assembly of 12 pentamers and a molecule of genomic RNA generates the provirion. During virion maturation, immature virions are rendered infectious following cleavage of VP0 into VP4 and VP2. This maturation seems to be an autocatalytic event triggered by the presence of RNA in the capsid and it is followed by a conformational change infectious virion. Post-translationally, myristoylation is required during RNA encapsidation and formation of the mature virus particle. In terms of processing, VPg is uridylylated by the polymerase into VPg-pUpU. This acts as a nucleotide-peptide primer for the genomic RNA replication.

The protein resides in the virion. It is found in the host cytoplasm. It localises to the host cytoplasmic vesicle membrane. The protein localises to the host nucleus. The catalysed reaction is a ribonucleoside 5'-triphosphate + H2O = a ribonucleoside 5'-diphosphate + phosphate + H(+). It catalyses the reaction Selective cleavage of Tyr-|-Gly bond in the picornavirus polyprotein.. It carries out the reaction RNA(n) + a ribonucleoside 5'-triphosphate = RNA(n+1) + diphosphate. The enzyme catalyses Selective cleavage of Gln-|-Gly bond in the poliovirus polyprotein. In other picornavirus reactions Glu may be substituted for Gln, and Ser or Thr for Gly.. Replication or transcription is subject to high level of random mutations by the nucleotide analog ribavirin. Functionally, forms an icosahedral capsid of pseudo T=3 symmetry with capsid proteins VP2 and VP3. The capsid is 300 Angstroms in diameter, composed of 60 copies of each capsid protein and enclosing the viral positive strand RNA genome. Capsid protein VP1 mainly forms the vertices of the capsid. Capsid protein VP1 interacts with host cell receptor PVR to provide virion attachment to target host cells. This attachment induces virion internalization predominantly through clathrin- and caveolin-independent endocytosis in Hela cells and through caveolin-mediated endocytosis in brain microvascular endothelial cells. Tyrosine kinases are probably involved in the entry process. Virus binding to PVR induces increased junctional permeability and rearrangement of junctional proteins. Modulation of endothelial tight junctions, as well as cytolytic infection of endothelial cells themselves, may result in loss of endothelial integrity which may help the virus to reach the CNS. After binding to its receptor, the capsid undergoes conformational changes. Capsid protein VP1 N-terminus (that contains an amphipathic alpha-helix) and capsid protein VP4 are externalized. Together, they shape a pore in the host membrane through which viral genome is translocated to host cell cytoplasm. In terms of biological role, forms an icosahedral capsid of pseudo T=3 symmetry with capsid proteins VP2 and VP3. The capsid is 300 Angstroms in diameter, composed of 60 copies of each capsid protein and enclosing the viral positive strand RNA genome. Its function is as follows. Lies on the inner surface of the capsid shell. After binding to the host receptor, the capsid undergoes conformational changes. Capsid protein VP4 is released, Capsid protein VP1 N-terminus is externalized, and together, they shape a pore in the host membrane through which the viral genome is translocated into the host cell cytoplasm. Component of immature procapsids, which is cleaved into capsid proteins VP4 and VP2 after maturation. Allows the capsid to remain inactive before the maturation step. Functionally, cysteine protease that cleaves viral polyprotein and specific host proteins. It is responsible for the autocatalytic cleavage between the P1 and P2 regions, which is the first cleavage occurring in the polyprotein. Also cleaves the host translation initiation factor EIF4G1, in order to shut down the capped cellular mRNA translation. Inhibits the host nucleus-cytoplasm protein and RNA trafficking by cleaving host members of the nuclear pores including NUP98, NUP62 and NUP153. Counteracts stress granule formation probably by antagonizing its assembly or promoting its dissassembly. Cleaves and inhibits host IFIH1/MDA5, thereby inhibiting the type-I IFN production and the establishment of the antiviral state. Cleaves and inhibits host MAVS, thereby inhibiting the type-I IFN production and the establishment of the antiviral state. In terms of biological role, plays an essential role in the virus replication cycle by acting as a viroporin. Creates a pore in the host endoplasmic reticulum and as a consequence releases Ca2+ in the cytoplasm of infected cell. In turn, high levels of cytoplasmic calcium may trigger membrane trafficking and transport of viral ER-associated proteins to viroplasms, sites of viral genome replication. Its function is as follows. Induces and associates with structural rearrangements of intracellular membranes. Displays RNA-binding, nucleotide binding and NTPase activities. May play a role in virion morphogenesis and viral RNA encapsidation by interacting with the capsid protein VP3. Localizes the viral replication complex to the surface of membranous vesicles. Together with protein 3CD binds the Cis-Active RNA Element (CRE) which is involved in RNA synthesis initiation. Acts as a cofactor to stimulate the activity of 3D polymerase, maybe through a nucleid acid chaperone activity. Functionally, localizes the viral replication complex to the surface of membranous vesicles. It inhibits host cell endoplasmic reticulum-to-Golgi apparatus transport and causes the disassembly of the Golgi complex, possibly through GBF1 interaction. This would result in depletion of MHC, trail receptors and IFN receptors at the host cell surface. Plays an essential role in viral RNA replication by recruiting ACBD3 and PI4KB at the viral replication sites, thereby allowing the formation of the rearranged membranous structures where viral replication takes place. In terms of biological role, acts as a primer for viral RNA replication and remains covalently bound to viral genomic RNA. VPg is uridylylated prior to priming replication into VPg-pUpU. The oriI viral genomic sequence may act as a template for this. The VPg-pUpU is then used as primer on the genomic RNA poly(A) by the RNA-dependent RNA polymerase to replicate the viral genome. During genome replication, the VPg-RNA linkage is removed by the host TDP2, thereby accelerating replication. During the late stage of the replication cycle, host TDP2 is excluded from sites of viral RNA synthesis and encapsidation, allowing for the generation of progeny virions. Its function is as follows. Involved in the viral replication complex and viral polypeptide maturation. It exhibits protease activity with a specificity and catalytic efficiency that is different from protease 3C. Protein 3CD lacks polymerase activity. Protein 3CD binds to the 5'UTR of the viral genome. Major viral protease that mediates proteolytic processing of the polyprotein. Cleaves host EIF5B, contributing to host translation shutoff. Also cleaves host PABPC1, contributing to host translation shutoff. Cleaves host RIGI and thus contributes to the inhibition of type I interferon production. Cleaves host NLRP1, triggers host N-glycine-mediated degradation of the autoinhibitory NLRP1 N-terminal fragment. Inhibits the integrated stress response (ISR) in the infected cell by cleaving host G3BP1. Stress granule formation is thus inhibited, which allows protein synthesis and viral replication. Functionally, replicates the viral genomic RNA on the surface of intracellular membranes. May form linear arrays of subunits that propagate along a strong head-to-tail interaction called interface-I. Covalently attaches UMP to a tyrosine of VPg, which is used to prime RNA synthesis. The positive stranded RNA genome is first replicated at virus induced membranous vesicles, creating a dsRNA genomic replication form. This dsRNA is then used as template to synthesize positive stranded RNA genomes. ss(+)RNA genomes are either translated, replicated or encapsidated. This chain is Genome polyprotein, found in Homo sapiens (Human).